A 189-amino-acid chain; its full sequence is Auxin-responsive protein IAA6 (189 aa).

The short motif at leucine 13–leucine 17 is the EAR-like (transcriptional repression) element. A PB1 domain is found at isoleucine 93–arginine 178.

It belongs to the Aux/IAA family. Homodimers and heterodimers. Interacts with TPL. Highly expressed in stems and flowers.

Its subcellular location is the nucleus. Functionally, aux/IAA proteins are short-lived transcriptional factors that function as repressors of early auxin response genes at low auxin concentrations. Repression is thought to result from the interaction with auxin response factors (ARFs), proteins that bind to the auxin-responsive promoter element (AuxRE). Formation of heterodimers with ARF proteins may alter their ability to modulate early auxin response genes expression. The polypeptide is Auxin-responsive protein IAA6 (IAA6) (Arabidopsis thaliana (Mouse-ear cress)).